The chain runs to 273 residues: Ribonuclease PH (273 aa).

Phosphate contacts are provided by residues R86 and G124–R126. The tract at residues G254–L273 is disordered.

It belongs to the RNase PH family. Homohexameric ring arranged as a trimer of dimers.

It carries out the reaction tRNA(n+1) + phosphate = tRNA(n) + a ribonucleoside 5'-diphosphate. In terms of biological role, phosphorolytic 3'-5' exoribonuclease that plays an important role in tRNA 3'-end maturation. Removes nucleotide residues following the 3'-CCA terminus of tRNAs; can also add nucleotides to the ends of RNA molecules by using nucleoside diphosphates as substrates, but this may not be physiologically important. Probably plays a role in initiation of 16S rRNA degradation (leading to ribosome degradation) during starvation. This chain is Ribonuclease PH, found in Symbiobacterium thermophilum (strain DSM 24528 / JCM 14929 / IAM 14863 / T).